The chain runs to 448 residues: High mobility group B protein 15 (448 aa).

The ARID domain occupies 29 to 120; that stretch reads VADPRLFMTS…LLNNYEQIYF (92 aa). The segment covering 219-236 has biased composition (polar residues); it reads PQQSHGVLPNTLNISANP. Disordered regions lie at residues 219 to 270, 333 to 352, and 366 to 448; these read PQQS…RSGY, KKNG…LPEQ, and VEED…AEQN. Positions 244 to 255 are enriched in basic residues; that stretch reads TKRRRRRKKSEI. Positions 263-330 form a DNA-binding region, HMG box; that stretch reads PKPNRSGYNF…RYRTEMEDYR (68 aa). Positions 389–398 are enriched in acidic residues; sequence SIETDPELEE. Residues 399-412 show a composition bias toward low complexity; it reads PSLNPSGPNLNPNP.

This sequence belongs to the HMGB family.

Its subcellular location is the nucleus. Binds preferentially DNA with A/T-rich content. This Arabidopsis thaliana (Mouse-ear cress) protein is High mobility group B protein 15 (HMGB15).